The primary structure comprises 1100 residues: Serine/threonine/tyrosine-interacting-like protein 2 (1100 aa).

Residues 1 to 12 (MASSVEDQQLQQ) are compositionally biased toward polar residues. Residues 1-21 (MASSVEDQQLQQEEAESVKDV) form a disordered region. One can recognise a Tyrosine-protein phosphatase domain in the interval 141 to 289 (SPVDEVWPNV…LRQLNETLME (149 aa)). Over residues 356–374 (CGSQQPNMQQPADQPSLPG) the composition is skewed to polar residues. Disordered stretches follow at residues 356 to 383 (CGSQ…EDGD), 411 to 436 (EDED…TSED), 479 to 504 (AAAR…DDVQ), 542 to 561 (KENA…APDL), 575 to 615 (KQQK…ERSR), 667 to 686 (VLSG…TPAP), 888 to 1060 (CEKP…DEEI), and 1075 to 1100 (VAEE…HDHK). The segment covering 418-428 (DKTQRAVRPDD) has biased composition (basic and acidic residues). Residues 580–615 (HGGEENKEEILQMSRGEDTATARRRQRREEVLERSR) are compositionally biased toward basic and acidic residues. Residues 667-676 (VLSGRSTRSL) are compositionally biased toward low complexity. Residues 888 to 898 (CEKPKPKRDYG) are compositionally biased toward basic and acidic residues. 3 stretches are compositionally biased toward polar residues: residues 907-916 (ASANNPTSSI), 994-1013 (SYSS…TSFA), and 1029-1041 (FQNH…SSVY). Positions 1089–1100 (RKQEESKSHDHK) are enriched in basic and acidic residues.

Belongs to the protein-tyrosine phosphatase family. Non-receptor class dual specificity subfamily. Expressed in muscle fibers in a regular striated pattern (at protein level).

Its subcellular location is the cytoplasm. The protein localises to the myofibril. The protein resides in the sarcomere. Functionally, required for myofiber maturation. This Danio rerio (Zebrafish) protein is Serine/threonine/tyrosine-interacting-like protein 2 (styxl2).